The sequence spans 99 residues: Sarcosine oxidase subunit delta (99 aa).

Cys-6, Cys-9, His-59, and Cys-63 together coordinate Zn(2+).

Belongs to the SoxD family. Heterotetramer composed of subunits alpha (SoxA), beta (SoxB), gamma (SoxG) and delta (SoxD).

The protein localises to the cytoplasm. The catalysed reaction is sarcosine + (6S)-5,6,7,8-tetrahydrofolate + O2 = (6R)-5,10-methylene-5,6,7,8-tetrahydrofolate + glycine + H2O2. It carries out the reaction sarcosine + O2 + H2O = formaldehyde + glycine + H2O2. Inhibited by Zn(2+), Cu(2+), Cd(2+), Hg(2+), Ag(+), p-chloromercuribenzoate (p-CMB), iodoacetamide, N-ethylmaleimide, CN(-), o-phenanthroline and sodium lauryl sulfate. In the presence of tetrahydrofolate, catalyzes the oxidative demethylation of sarcosine to yield glycine, 5,10-methylenetetrahydrofolate and hydrogen peroxide. In the absence of tetrahydrofolate, catalyzes the oxidative demethylation of sarcosine to yield glycine, formaldehyde and hydrogen peroxide. Can also use N-methyl-L-alanine and N-ethyl-L-glycine. Is very specific for oxygen as an acceptor. The protein is Sarcosine oxidase subunit delta of Corynebacterium sp. (strain U-96).